The sequence spans 255 residues: 5'-nucleotidase SurE (255 aa).

The a divalent metal cation site is built by Asp-8, Asp-9, Ser-39, and Asn-91.

Belongs to the SurE nucleotidase family. It depends on a divalent metal cation as a cofactor.

Its subcellular location is the cytoplasm. The enzyme catalyses a ribonucleoside 5'-phosphate + H2O = a ribonucleoside + phosphate. In terms of biological role, nucleotidase that shows phosphatase activity on nucleoside 5'-monophosphates. The sequence is that of 5'-nucleotidase SurE from Acinetobacter baylyi (strain ATCC 33305 / BD413 / ADP1).